The following is a 131-amino-acid chain: MDDADYDNDDVGGDDFDDVDEDVDEDINQEEEADNIEIIAPGGAGGGGVPKSKRITTKYMTKYERARVLGTRALQIAMCAPIMVELDGETDPLQIAMKELKQKKIPIIIRRYLPDHSYEDWSIDELIMVDN.

The tract at residues 1-24 (MDDADYDNDDVGGDDFDDVDEDVD) is disordered.

Belongs to the archaeal Rpo6/eukaryotic RPB6 RNA polymerase subunit family. In terms of assembly, component of the RNA polymerase I (Pol I), RNA polymerase II (Pol II) and RNA polymerase III (Pol III) complexes consisting of at least 13, 12 and 17 subunits, respectively.

It is found in the nucleus. Its function is as follows. DNA-dependent RNA polymerases catalyze the transcription of DNA into RNA using the four ribonucleoside triphosphates as substrates. Common component of RNA polymerases I, II and III which synthesize ribosomal RNA precursors, mRNA precursors and many functional non-coding RNAs, and small RNAs, such as 5S rRNA and tRNAs, respectively. Pol II is the central component of the basal RNA polymerase II transcription machinery. Pols are composed of mobile elements that move relative to each other. In Pol II, Polr2F/RPB6 is part of the clamp element and together with parts of Polr2A/RPB1 and RPB2 forms a pocket to which the Polr2D/RPB4-Polr2G/RPB7 subcomplex binds. The sequence is that of DNA-directed RNA polymerases I, II, and III subunit RPABC2 from Drosophila melanogaster (Fruit fly).